A 557-amino-acid polypeptide reads, in one-letter code: Dicarboxylate transporter 1, chloroplastic (557 aa).

A chloroplast-targeting transit peptide spans 1–69 (MASLALSGSC…STLVKASSTV (69 aa)). 12 helical membrane-spanning segments follow: residues 90 to 110 (AAIKPLLASIATGLILWFVPV), 122 to 142 (LAIFLATIVGIITQPLPLGAV), 158 to 178 (FAAAFSAFGDPIPWLIALAFF), 229 to 249 (AGGIFLPLVKSLCVACGSNVG), 256 to 276 (LGSWLMLTCFQTSVISSSMFL), 305 to 325 (AAIVPGLVSLIVVPFLLYLIY), 355 to 375 (IMAATLFLTVGLWIFGAKLGV), 376 to 396 (DAVTAAILGLSVLLVTGVVTW), 411 to 431 (WFAALIAMAGYLNKYGLIEWF), 438 to 458 (FVGGLGLSWQLSFGILVLLYF), 477 to 497 (AFLSVSTALGTPPYFAALVLA), and 531 to 551 (YGFLISIVNILIWLGVGGAWW).

This sequence belongs to the SLC13A/DASS transporter (TC 2.A.47) family. DIT1 subfamily. Expressed in roots, rosette and cauline leaves, stems, flowers and siliques.

The protein localises to the plastid. It is found in the chloroplast inner membrane. In terms of biological role, 2-oxoglutarate/malate translocator involved with DIT2-1 in primary ammonia assimilation and in the re-assimilation of ammonia generated by the photorespiratory pathway. Imports 2-oxoglutarate into plastids as precursor for ammonia assimilation. 2-oxoglutarate is converted to glutamate, the end product of ammonia assimilation, which is exported to the cytosol by DIT2-1. The polypeptide is Dicarboxylate transporter 1, chloroplastic (DIT1) (Arabidopsis thaliana (Mouse-ear cress)).